The primary structure comprises 294 residues: 4-hydroxy-tetrahydrodipicolinate synthase (294 aa).

Residue T47 participates in pyruvate binding. Y136 functions as the Proton donor/acceptor in the catalytic mechanism. K164 (schiff-base intermediate with substrate) is an active-site residue. V206 is a binding site for pyruvate.

Belongs to the DapA family. As to quaternary structure, homotetramer; dimer of dimers.

It localises to the cytoplasm. It catalyses the reaction L-aspartate 4-semialdehyde + pyruvate = (2S,4S)-4-hydroxy-2,3,4,5-tetrahydrodipicolinate + H2O + H(+). It participates in amino-acid biosynthesis; L-lysine biosynthesis via DAP pathway; (S)-tetrahydrodipicolinate from L-aspartate: step 3/4. Its function is as follows. Catalyzes the condensation of (S)-aspartate-beta-semialdehyde [(S)-ASA] and pyruvate to 4-hydroxy-tetrahydrodipicolinate (HTPA). In Acaryochloris marina (strain MBIC 11017), this protein is 4-hydroxy-tetrahydrodipicolinate synthase.